We begin with the raw amino-acid sequence, 1295 residues long: Phosphoribosylformylglycinamidine synthase (1295 aa).

Residues Ser-302 to Pro-327 form a disordered region. ATP is bound by residues Gly-306–Asp-317 and Ala-677. Mg(2+)-binding residues include Asp-678, Glu-717, Asn-721, and Asp-884. Position 886 (Ser-886) interacts with ATP. The 254-residue stretch at Val-1042 to Gly-1295 folds into the Glutamine amidotransferase type-1 domain. The active-site Nucleophile is Cys-1135. Active-site residues include His-1260 and Glu-1262.

In the N-terminal section; belongs to the FGAMS family. As to quaternary structure, monomer.

It is found in the cytoplasm. The enzyme catalyses N(2)-formyl-N(1)-(5-phospho-beta-D-ribosyl)glycinamide + L-glutamine + ATP + H2O = 2-formamido-N(1)-(5-O-phospho-beta-D-ribosyl)acetamidine + L-glutamate + ADP + phosphate + H(+). It participates in purine metabolism; IMP biosynthesis via de novo pathway; 5-amino-1-(5-phospho-D-ribosyl)imidazole from N(2)-formyl-N(1)-(5-phospho-D-ribosyl)glycinamide: step 1/2. Its function is as follows. Phosphoribosylformylglycinamidine synthase involved in the purines biosynthetic pathway. Catalyzes the ATP-dependent conversion of formylglycinamide ribonucleotide (FGAR) and glutamine to yield formylglycinamidine ribonucleotide (FGAM) and glutamate. This is Phosphoribosylformylglycinamidine synthase from Photorhabdus laumondii subsp. laumondii (strain DSM 15139 / CIP 105565 / TT01) (Photorhabdus luminescens subsp. laumondii).